The chain runs to 217 residues: ATP-dependent Clp protease proteolytic subunit (217 aa).

Serine 121 (nucleophile) is an active-site residue. Histidine 146 is a catalytic residue.

Belongs to the peptidase S14 family. Fourteen ClpP subunits assemble into 2 heptameric rings which stack back to back to give a disk-like structure with a central cavity, resembling the structure of eukaryotic proteasomes.

Its subcellular location is the cytoplasm. The enzyme catalyses Hydrolysis of proteins to small peptides in the presence of ATP and magnesium. alpha-casein is the usual test substrate. In the absence of ATP, only oligopeptides shorter than five residues are hydrolyzed (such as succinyl-Leu-Tyr-|-NHMec, and Leu-Tyr-Leu-|-Tyr-Trp, in which cleavage of the -Tyr-|-Leu- and -Tyr-|-Trp bonds also occurs).. Its function is as follows. Cleaves peptides in various proteins in a process that requires ATP hydrolysis. Has a chymotrypsin-like activity. Plays a major role in the degradation of misfolded proteins. The chain is ATP-dependent Clp protease proteolytic subunit from Burkholderia cenocepacia (strain HI2424).